The following is a 465-amino-acid chain: Pre-mRNA-splicing factor URN1 (465 aa).

Residues 1–32 form the WW domain; sequence MRGEWQEFKTPAGKKYYYNKNTKQSRWEKPNL. Disordered stretches follow at residues 28–49, 144–198, and 266–288; these read EKPN…QTER, ERKD…VNQD, and ERSG…DSEV. S150 bears the Phosphoserine mark. The segment covering 160–175 has biased composition (polar residues); sequence LQESHTGLVSGYGSSS. Acidic residues predominate over residues 176 to 192; the sequence is GEEDEEEDEEEDEENEE. Residues 212 to 266 form the FF domain; sequence DIDERNIFFELFDRYKLDKFSTWSLQSKKIENDPDFYKIRDDTVRESLFEEWCGE. Residues 274 to 288 show a composition bias toward acidic residues; it reads EESDSEDNSEDDSEV.

Component of the precatalytic spliceosomal complex B. Interacts with PRP19.

The protein localises to the nucleus. Its function is as follows. Component of the spliceosome involved in mRNA processing. The sequence is that of Pre-mRNA-splicing factor URN1 (URN1) from Saccharomyces cerevisiae (strain ATCC 204508 / S288c) (Baker's yeast).